A 265-amino-acid chain; its full sequence is MNKDVSLGQPIVRYEDGKLFNTTDQYVTEFPLTIMVNGEEFATVICSPTNLEELVIGFLASEGAILKRDELKSVLIDDSKGFAHVELNKDLGDRFQYSTKRMIASCCGKSREFYFQNDAAVAKTSMSKITLTPQQIINMMTRLQSASHIYQETGGLHNAALSDGLTFFVHRQDIGRHNALDKLYGFCIQRHITVRDKVLIFSGRISSEILIKAAKIGVGVILSKSAPTTLAVTLANDLNITAVGFIRNGGFNIYSHPERIIDSEQ.

Cys-107 serves as the catalytic Cysteine persulfide intermediate.

It belongs to the FdhD family.

It is found in the cytoplasm. Its function is as follows. Required for formate dehydrogenase (FDH) activity. Acts as a sulfur carrier protein that transfers sulfur from IscS to the molybdenum cofactor prior to its insertion into FDH. This is Sulfur carrier protein FdhD from Staphylococcus aureus (strain MRSA252).